Here is a 505-residue protein sequence, read N- to C-terminus: Protein FAM114A2 (505 aa).

Positions Met-1 to Lys-65 are disordered. Positions Lys-51–Thr-63 are enriched in basic and acidic residues. 3 positions are modified to phosphoserine: Ser-87, Ser-146, and Ser-209. Residues Leu-268–Phe-295 are a coiled coil. The interval Lys-342–Val-366 is disordered.

This sequence belongs to the FAM114 family.

In Homo sapiens (Human), this protein is Protein FAM114A2 (FAM114A2).